Consider the following 509-residue polypeptide: 2,3-bisphosphoglycerate-independent phosphoglycerate mutase (509 aa).

Residue Asp-11 coordinates Mn(2+). Residue Tyr-35 is modified to Phosphotyrosine. Ser-61 provides a ligand contact to Mn(2+). The active-site Phosphoserine intermediate is Ser-61. Residues His-122, 152-153, Arg-184, Arg-190, 260-263, and Lys-335 contribute to the substrate site; these read RD and RPDR. Mn(2+) is bound by residues Asp-402, His-406, Asp-443, His-444, and His-461.

This sequence belongs to the BPG-independent phosphoglycerate mutase family. As to quaternary structure, monomer. Mn(2+) is required as a cofactor.

The catalysed reaction is (2R)-2-phosphoglycerate = (2R)-3-phosphoglycerate. It functions in the pathway carbohydrate degradation; glycolysis; pyruvate from D-glyceraldehyde 3-phosphate: step 3/5. Essential for rapid growth and for sporulation. Catalyzes the interconversion of 2-phosphoglycerate and 3-phosphoglycerate. This is 2,3-bisphosphoglycerate-independent phosphoglycerate mutase from Bacillus cereus (strain ATCC 10987 / NRS 248).